The sequence spans 361 residues: Phospho-N-acetylmuramoyl-pentapeptide-transferase (361 aa).

Transmembrane regions (helical) follow at residues 28–48, 73–93, 97–117, 134–154, 168–188, 200–220, 237–257, 264–284, 289–309, and 338–358; these read LAAL…IRSL, TMGG…WADL, YIWL…VDDY, FFWQ…TAEL, VAIP…IVGS, GLAI…AYVA, AGEL…FLWF, VFMG…ITVI, IVLV…MIQV, and QVVV…LSTL.

It belongs to the glycosyltransferase 4 family. MraY subfamily. It depends on Mg(2+) as a cofactor.

The protein localises to the cell inner membrane. It carries out the reaction UDP-N-acetyl-alpha-D-muramoyl-L-alanyl-gamma-D-glutamyl-meso-2,6-diaminopimeloyl-D-alanyl-D-alanine + di-trans,octa-cis-undecaprenyl phosphate = di-trans,octa-cis-undecaprenyl diphospho-N-acetyl-alpha-D-muramoyl-L-alanyl-D-glutamyl-meso-2,6-diaminopimeloyl-D-alanyl-D-alanine + UMP. The protein operates within cell wall biogenesis; peptidoglycan biosynthesis. Its function is as follows. Catalyzes the initial step of the lipid cycle reactions in the biosynthesis of the cell wall peptidoglycan: transfers peptidoglycan precursor phospho-MurNAc-pentapeptide from UDP-MurNAc-pentapeptide onto the lipid carrier undecaprenyl phosphate, yielding undecaprenyl-pyrophosphoryl-MurNAc-pentapeptide, known as lipid I. This is Phospho-N-acetylmuramoyl-pentapeptide-transferase from Nitrosomonas eutropha (strain DSM 101675 / C91 / Nm57).